Reading from the N-terminus, the 174-residue chain is Adipose-secreted signaling protein (174 aa).

At A2 the chain carries N-acetylalanine. Residue T147 is modified to Phosphothreonine.

It belongs to the ADISSP family. In terms of tissue distribution, expression is adipose-specific and highly brown adipose tissue-enriched.

Its subcellular location is the secreted. Adipocyte-secreted protein (adipokine) that acts as a key regulator for white adipose tissue (WAT) thermogenesis and glucose homeostasis at least in part through activation of protein kinase A (PKA). The chain is Adipose-secreted signaling protein from Mus musculus (Mouse).